A 448-amino-acid polypeptide reads, in one-letter code: GTPase Der (448 aa).

EngA-type G domains follow at residues 2-171 and 181-364; these read FTVV…PDTQ and PKIA…EEYS. GTP-binding positions include 8 to 15, 58 to 62, 123 to 126, 187 to 194, 234 to 238, and 305 to 308; these read GRPNVGKS, DTGGF, NKID, DTAGI, and NKWD. Positions 365 to 448 constitute a KH-like domain; it reads KRVSTSELNR…PINIKIKQRK (84 aa).

This sequence belongs to the TRAFAC class TrmE-Era-EngA-EngB-Septin-like GTPase superfamily. EngA (Der) GTPase family. In terms of assembly, associates with the 50S ribosomal subunit.

GTPase that plays an essential role in the late steps of ribosome biogenesis. The chain is GTPase Der from Thermodesulfovibrio yellowstonii (strain ATCC 51303 / DSM 11347 / YP87).